The following is a 187-amino-acid chain: GTP cyclohydrolase 1 1 (187 aa).

It belongs to the GTP cyclohydrolase I family. As to quaternary structure, homomer.

The catalysed reaction is GTP + H2O = 7,8-dihydroneopterin 3'-triphosphate + formate + H(+). It functions in the pathway cofactor biosynthesis; 7,8-dihydroneopterin triphosphate biosynthesis; 7,8-dihydroneopterin triphosphate from GTP: step 1/1. This is GTP cyclohydrolase 1 1 from Pseudomonas syringae pv. tomato (strain ATCC BAA-871 / DC3000).